A 937-amino-acid polypeptide reads, in one-letter code: uncharacterized protein (937 aa).

Thr-2 carries the post-translational modification N-acetylthreonine. Residues 281-937 are disordered; it reads NESPSSNINT…KKGKGKGGRK (657 aa). Over residues 290 to 308 the composition is skewed to low complexity; that stretch reads TTTTSTTTTTTTTTSSPVV. Catalysis depends on Thr-292, which acts as the Charge relay system. 8 stretches are compositionally biased toward basic and acidic residues: residues 309–402, 411–431, 469–489, 512–532, 600–615, 667–687, 738–758, and 780–872; these read EESK…EKQQ, AEKE…RLEA, AEKE…KLEA, and AEKE…KVEE. Residues 345–802 adopt a coiled-coil conformation; that stretch reads VDDSKEKEEK…KAAEETKVEE (458 aa). Positions 887 to 897 are enriched in acidic residues; that stretch reads EETEEGEEVDE. Positions 898-924 are enriched in low complexity; it reads ASNTTTEQTTTNANQPKKPNNNNNNNK. The segment covering 925–937 has biased composition (basic residues); it reads GKGKKGKGKGGRK.

The protein belongs to the AB hydrolase superfamily.

This is an uncharacterized protein from Dictyostelium discoideum (Social amoeba).